A 455-amino-acid polypeptide reads, in one-letter code: 2-succinylbenzoate--CoA ligase (455 aa).

Belongs to the ATP-dependent AMP-binding enzyme family. MenE subfamily.

The enzyme catalyses 2-succinylbenzoate + ATP + CoA = 2-succinylbenzoyl-CoA + AMP + diphosphate. It participates in quinol/quinone metabolism; 1,4-dihydroxy-2-naphthoate biosynthesis; 1,4-dihydroxy-2-naphthoate from chorismate: step 5/7. It functions in the pathway quinol/quinone metabolism; menaquinone biosynthesis. In terms of biological role, converts 2-succinylbenzoate (OSB) to 2-succinylbenzoyl-CoA (OSB-CoA). In Salmonella typhimurium (strain LT2 / SGSC1412 / ATCC 700720), this protein is 2-succinylbenzoate--CoA ligase.